A 423-amino-acid chain; its full sequence is uncharacterized protein (423 aa).

Belongs to the asfivirus E423R family.

It localises to the virion. This is an uncharacterized protein from Ornithodoros (relapsing fever ticks).